Consider the following 78-residue polypeptide: Mandibular organ-inhibiting hormone 1 (78 aa).

Disulfide bonds link C7–C44, C24–C40, and C27–C53.

Belongs to the arthropod CHH/MIH/GIH/VIH hormone family. As to expression, produced by the medulla terminalis X-organ in the eyestalks and transported to the sinus gland where it is stored and released.

It localises to the secreted. In terms of biological role, represses the synthesis of methyl farnesoate, the precursor of insect juvenile hormone III in the mandibular organ. The protein is Mandibular organ-inhibiting hormone 1 of Cancer pagurus (Rock crab).